A 158-amino-acid polypeptide reads, in one-letter code: Regulator of sigma D (158 aa).

This sequence belongs to the Rsd/AlgQ family. In terms of assembly, interacts with RpoD.

The protein resides in the cytoplasm. In terms of biological role, binds RpoD and negatively regulates RpoD-mediated transcription activation by preventing the interaction between the primary sigma factor RpoD with the catalytic core of the RNA polymerase and with promoter DNA. May be involved in replacement of the RNA polymerase sigma subunit from RpoD to RpoS during the transition from exponential growth to the stationary phase. The protein is Regulator of sigma D of Shigella dysenteriae serotype 1 (strain Sd197).